Reading from the N-terminus, the 737-residue chain is Lysyl oxidase homolog 2A (737 aa).

An N-terminal signal peptide occupies residues 1 to 18 (MAVSSALCIFSLLVLAQA). 4 consecutive SRCR domains span residues 29 to 130 (LRLA…VICN), 159 to 270 (IRPI…VSCV), 294 to 393 (VRLR…VRCN), and 403 to 512 (IRLS…VSCS). Disulfide bonds link C55/C119, C68/C129, C99/C109, C188/C259, C201/C269, C235/C245, C319/C382, C332/C392, and C363/C373. N256 carries N-linked (GlcNAc...) asparagine glycosylation. N423 carries an N-linked (GlcNAc...) asparagine glycan. 3 cysteine pairs are disulfide-bonded: C432/C498, C445/C511, and C479/C489. Positions 516–718 (PDLVLNAQLV…WTYSCHIGGS (203 aa)) are lysyl-oxidase like. Positions 517 and 518 each coordinate Ca(2+). 4 disulfides stabilise this stretch: C541-C592, C547-C662, C624-C640, and C630-C652. Positions 593, 595, and 597 each coordinate Cu cation. N611 is a glycosylation site (N-linked (GlcNAc...) asparagine). The segment at residues 620-656 (KASFCLEDTHCDEGISKRYHCANFGEQGITVGCWDTY) is a cross-link (lysine tyrosylquinone (Lys-Tyr)). 2',4',5'-topaquinone is present on Y656. Ca(2+) is bound by residues E689, D691, N694, and N695. An intrachain disulfide couples C699 to C713.

It belongs to the lysyl oxidase family. Cu cation serves as cofactor. The cofactor is lysine tyrosylquinone residue. The lysine tyrosylquinone cross-link (LTQ) is generated by condensation of the epsilon-amino group of a lysine with a topaquinone produced by oxidation of tyrosine.

The protein localises to the secreted. The protein resides in the extracellular space. It is found in the extracellular matrix. It localises to the basement membrane. Its subcellular location is the nucleus. The protein localises to the chromosome. The protein resides in the endoplasmic reticulum. It catalyses the reaction L-lysyl-[protein] + O2 + H2O = (S)-2-amino-6-oxohexanoyl-[protein] + H2O2 + NH4(+). Functionally, mediates the post-translational oxidative deamination of lysine residues on target proteins leading to the formation of deaminated lysine (allysine). Acts as a transcription corepressor and specifically mediates deamination of trimethylated 'Lys-4' of histone H3 (H3K4me3), a specific tag for epigenetic transcriptional activation. Shows no activity against histone H3 when it is trimethylated on 'Lys-9' (H3K9me3) or 'Lys-27' (H3K27me3) or when 'Lys-4' is monomethylated (H3K4me1) or dimethylated (H3K4me2). Also mediates deamination of methylated TAF10, a member of the transcription factor IID (TFIID) complex, which induces release of TAF10 from promoters, leading to inhibition of TFIID-dependent transcription. LOXL2-mediated deamination of TAF10 results in transcriptional repression of genes required for embryonic stem cell pluripotency. Involved in epithelial to mesenchymal transition (EMT) and participates in repression of E-cadherin, probably by mediating deamination of histone H3. When secreted into the extracellular matrix, promotes cross-linking of extracellular matrix proteins by mediating oxidative deamination of peptidyl lysine residues in precursors to fibrous collagen and elastin. Acts as a regulator of sprouting angiogenesis, probably via collagen IV scaffolding. Acts as a regulator of chondrocyte differentiation, probably by regulating expression of factors that control chondrocyte differentiation. Required with loxl2b for correct expression of Sox2 and for neural differentiation. The polypeptide is Lysyl oxidase homolog 2A (loxl2a) (Danio rerio (Zebrafish)).